The following is a 163-amino-acid chain: Ureidoglycolate lyase (163 aa).

It belongs to the ureidoglycolate lyase family. Homodimer. Ni(2+) serves as cofactor.

It carries out the reaction (S)-ureidoglycolate = urea + glyoxylate. It participates in nitrogen metabolism; (S)-allantoin degradation. Catalyzes the catabolism of the allantoin degradation intermediate (S)-ureidoglycolate, generating urea and glyoxylate. Involved in the utilization of allantoin as nitrogen source. This Mesorhizobium japonicum (strain LMG 29417 / CECT 9101 / MAFF 303099) (Mesorhizobium loti (strain MAFF 303099)) protein is Ureidoglycolate lyase.